Here is a 316-residue protein sequence, read N- to C-terminus: Pantothenate kinase (316 aa).

95–102 (GSVAVGKS) contacts ATP.

Belongs to the prokaryotic pantothenate kinase family.

It is found in the cytoplasm. The enzyme catalyses (R)-pantothenate + ATP = (R)-4'-phosphopantothenate + ADP + H(+). Its pathway is cofactor biosynthesis; coenzyme A biosynthesis; CoA from (R)-pantothenate: step 1/5. This chain is Pantothenate kinase, found in Yersinia pseudotuberculosis serotype O:3 (strain YPIII).